Reading from the N-terminus, the 359-residue chain is Probable ribonucleotide transport ATP-binding protein mkl (359 aa).

In terms of domain architecture, ABC transporter spans I28–N264. G60 to S67 contributes to the ATP binding site.

The protein belongs to the ABC transporter superfamily.

In terms of biological role, not known, could be involved in the transport of ribonucleotides. The polypeptide is Probable ribonucleotide transport ATP-binding protein mkl (mkl) (Mycobacterium bovis (strain ATCC BAA-935 / AF2122/97)).